The sequence spans 179 residues: uncharacterized protein (179 aa).

Positions 1–27 (MNKSMIQSGGYVLLAGLILAMSSTLFA) are cleaved as a signal peptide. Cys43 and Cys83 are joined by a disulfide.

Belongs to the fimbrial protein family.

It is found in the fimbrium. Part of the yfcOPQRSUV fimbrial operon. Could contribute to adhesion to various surfaces in specific environmental niches. Increases adhesion to eukaryotic T24 bladder epithelial cells in the absence of fim genes. This is an uncharacterized protein from Escherichia coli (strain K12).